Reading from the N-terminus, the 314-residue chain is Ribosome production factor 2 homolog (314 aa).

The Brix domain maps to 28-238; the sequence is KKTLILHGTK…IRRNRLPNDS (211 aa). Positions 238–314 are disordered; it reads SLMKEAMRTS…VAKKMKVSSE (77 aa). Basic and acidic residues-rich tracts occupy residues 239–249 and 275–314; these read LMKEAMRTSKD and QKLK…VSSE.

It belongs to the RPF2 family.

It is found in the nucleus. Its subcellular location is the nucleolus. This Arabidopsis thaliana (Mouse-ear cress) protein is Ribosome production factor 2 homolog.